Reading from the N-terminus, the 105-residue chain is MSTKNKKAAGGNGGAPKQTRQQSHDSQDYSSFKTVLFYCMLIVFLPVLTFFVLKGFVLDQFLDISEVKVNIASAVGAVVALHVALGLYIYRAYFGAPGSKASKTD.

A disordered region spans residues 1–26 (MSTKNKKAAGGNGGAPKQTRQQSHDS). Over 1 to 36 (MSTKNKKAAGGNGGAPKQTRQQSHDSQDYSSFKTVL) the chain is Cytoplasmic. A helical transmembrane segment spans residues 37–57 (FYCMLIVFLPVLTFFVLKGFV). Residues 58–68 (LDQFLDISEVK) lie on the Lumenal side of the membrane. Residues 69 to 89 (VNIASAVGAVVALHVALGLYI) traverse the membrane as a helical segment. At 90–105 (YRAYFGAPGSKASKTD) the chain is on the cytoplasmic side.

It belongs to the VMA21 family.

The protein localises to the endoplasmic reticulum membrane. It is found in the endoplasmic reticulum-Golgi intermediate compartment membrane. The protein resides in the cytoplasmic vesicle. It localises to the COPII-coated vesicle membrane. Required for the assembly of the V0 complex of the vacuolar ATPase (V-ATPase) in the endoplasmic reticulum. The polypeptide is Vacuolar ATPase assembly integral membrane protein VMA21 homolog (Drosophila yakuba (Fruit fly)).